A 110-amino-acid chain; its full sequence is UPF0060 membrane protein Dtpsy_1668 (110 aa).

A run of 4 helical transmembrane segments spans residues 7 to 27 (LALFLLTAVAEIVGCYLPWLW), 33 to 53 (SAWLLVPAAASLALFAWLLTL), 63 to 83 (AAYGGVYVAVALVWLWTVDGV), and 86 to 106 (GPWDWLGVSVTLCGMAIIAFA).

The protein belongs to the UPF0060 family.

It localises to the cell inner membrane. This is UPF0060 membrane protein Dtpsy_1668 from Acidovorax ebreus (strain TPSY) (Diaphorobacter sp. (strain TPSY)).